We begin with the raw amino-acid sequence, 175 residues long: MALNVFQKQEVVKELAGVATKAHSLIVAEYAGITVPQMTAMRKQARESGVYLKVVKNKLAARALGDTEYAVIKEKLIGPLLYAFSLEDPGAAGRLIKEFSKKHDKLKSKAVSLGGVLYPAGHVDVLASLPTRLQALAMLARVLSEPVTLFARAIKAMADDKSETFAVSSPETSEA.

This sequence belongs to the universal ribosomal protein uL10 family. In terms of assembly, part of the ribosomal stalk of the 50S ribosomal subunit. The N-terminus interacts with L11 and the large rRNA to form the base of the stalk. The C-terminus forms an elongated spine to which L12 dimers bind in a sequential fashion forming a multimeric L10(L12)X complex.

Functionally, forms part of the ribosomal stalk, playing a central role in the interaction of the ribosome with GTP-bound translation factors. This Xylella fastidiosa (strain M23) protein is Large ribosomal subunit protein uL10.